The sequence spans 120 residues: Large ribosomal subunit protein uL18 (120 aa).

It belongs to the universal ribosomal protein uL18 family. Part of the 50S ribosomal subunit; part of the 5S rRNA/L5/L18/L25 subcomplex. Contacts the 5S and 23S rRNAs.

This is one of the proteins that bind and probably mediate the attachment of the 5S RNA into the large ribosomal subunit, where it forms part of the central protuberance. The sequence is that of Large ribosomal subunit protein uL18 from Bartonella tribocorum (strain CIP 105476 / IBS 506).